We begin with the raw amino-acid sequence, 221 residues long: MNFLTYKLLNLEELKILKLNLNKQNELWESGKMTAGSQASKVKENLQLNRNSEISKKYSQLIRKKIITNPLIKSFALPKTIHGIMFTKSLQNMHYGRHIDNPFMSSGRSDLSFTISLTNKADYQGGELVIETLNSEKKLKLDAGEIIIYPSTYLHSVKKVKNGERLVCVGWIESYVKSIEEREYLFDLDAGAKGLLAKYGRSDELDNIFKSYSNLLRLLGN.

In terms of domain architecture, Fe2OG dioxygenase spans 80 to 174 (TIHGIMFTKS…RLVCVGWIES (95 aa)). Fe cation-binding residues include His-98, Asp-100, and His-155. Residue Arg-165 coordinates 2-oxoglutarate.

Fe(2+) is required as a cofactor. Requires L-ascorbate as cofactor.

The sequence is that of PKHD-type hydroxylase P9515_13321 from Prochlorococcus marinus (strain MIT 9515).